The sequence spans 146 residues: MRVVVQRAKDAKVTVAGEVVGEIDFGLVLLVGITHDDTEEDAAFVADKIAHLRIFEDEHGKMNVSLIDVGGAILSISQFTLYGDCRKGRRPNFMDAAKPEHAKHIYEAFNEQLRQKGIRVETGVFGAMMDVMLTNVGPVTLIVESK.

A Gly-cisPro motif, important for rejection of L-amino acids motif is present at residues 137-138 (GP).

It belongs to the DTD family. Homodimer.

Its subcellular location is the cytoplasm. The enzyme catalyses glycyl-tRNA(Ala) + H2O = tRNA(Ala) + glycine + H(+). The catalysed reaction is a D-aminoacyl-tRNA + H2O = a tRNA + a D-alpha-amino acid + H(+). In terms of biological role, an aminoacyl-tRNA editing enzyme that deacylates mischarged D-aminoacyl-tRNAs. Also deacylates mischarged glycyl-tRNA(Ala), protecting cells against glycine mischarging by AlaRS. Acts via tRNA-based rather than protein-based catalysis; rejects L-amino acids rather than detecting D-amino acids in the active site. By recycling D-aminoacyl-tRNA to D-amino acids and free tRNA molecules, this enzyme counteracts the toxicity associated with the formation of D-aminoacyl-tRNA entities in vivo and helps enforce protein L-homochirality. The protein is D-aminoacyl-tRNA deacylase of Anoxybacillus flavithermus (strain DSM 21510 / WK1).